The sequence spans 232 residues: Ubiquinone biosynthesis O-methyltransferase (232 aa).

Residues R36, G55, D76, and L120 each contribute to the S-adenosyl-L-methionine site.

Belongs to the methyltransferase superfamily. UbiG/COQ3 family.

The enzyme catalyses a 3-demethylubiquinol + S-adenosyl-L-methionine = a ubiquinol + S-adenosyl-L-homocysteine + H(+). It catalyses the reaction a 3-(all-trans-polyprenyl)benzene-1,2-diol + S-adenosyl-L-methionine = a 2-methoxy-6-(all-trans-polyprenyl)phenol + S-adenosyl-L-homocysteine + H(+). Its pathway is cofactor biosynthesis; ubiquinone biosynthesis. Its function is as follows. O-methyltransferase that catalyzes the 2 O-methylation steps in the ubiquinone biosynthetic pathway. The protein is Ubiquinone biosynthesis O-methyltransferase of Pseudomonas putida (strain ATCC 700007 / DSM 6899 / JCM 31910 / BCRC 17059 / LMG 24140 / F1).